The primary structure comprises 155 residues: Ribonuclease H (155 aa).

One can recognise an RNase H type-1 domain in the interval 4–145 (DISKVVIYTD…ADKLAVQGRQ (142 aa)). D13, E51, D73, and D137 together coordinate Mg(2+).

Belongs to the RNase H family. Monomer. The cofactor is Mg(2+).

The protein resides in the cytoplasm. It carries out the reaction Endonucleolytic cleavage to 5'-phosphomonoester.. In terms of biological role, endonuclease that specifically degrades the RNA of RNA-DNA hybrids. In Rickettsia bellii (strain RML369-C), this protein is Ribonuclease H.